The chain runs to 779 residues: DNA topoisomerase 1 (779 aa).

In terms of domain architecture, Toprim spans 1–111 (MKLVIVESPA…VESDDFFKRV (111 aa)). Glu-7 and Asp-80 together coordinate Mg(2+). One can recognise a Topo IA-type catalytic domain in the interval 132–568 (DTNLVNAQQA…FWSGFNNNIE (437 aa)). The tract at residues 166–171 (SAGRVQ) is interaction with DNA. Tyr-304 functions as the O-(5'-phospho-DNA)-tyrosine intermediate in the catalytic mechanism. Residues 600 to 627 (CPSCKTGQLSLKLGKFGAFLACSNYPEC) form a C4-type zinc finger.

Belongs to the type IA topoisomerase family. As to quaternary structure, monomer. It depends on Mg(2+) as a cofactor.

It carries out the reaction ATP-independent breakage of single-stranded DNA, followed by passage and rejoining.. Its function is as follows. Releases the supercoiling and torsional tension of DNA, which is introduced during the DNA replication and transcription, by transiently cleaving and rejoining one strand of the DNA duplex. Introduces a single-strand break via transesterification at a target site in duplex DNA. The scissile phosphodiester is attacked by the catalytic tyrosine of the enzyme, resulting in the formation of a DNA-(5'-phosphotyrosyl)-enzyme intermediate and the expulsion of a 3'-OH DNA strand. The free DNA strand then undergoes passage around the unbroken strand, thus removing DNA supercoils. Finally, in the religation step, the DNA 3'-OH attacks the covalent intermediate to expel the active-site tyrosine and restore the DNA phosphodiester backbone. The polypeptide is DNA topoisomerase 1 (Rickettsia typhi (strain ATCC VR-144 / Wilmington)).